The chain runs to 483 residues: V-type proton ATPase subunit H (483 aa).

Serine 483 is modified (phosphoserine).

Belongs to the V-ATPase H subunit family. As to quaternary structure, V-ATPase is a heteromultimeric enzyme made up of two complexes: the ATP-hydrolytic V1 complex and the proton translocation V0 complex. The V1 complex consists of three catalytic AB heterodimers that form a heterohexamer, three peripheral stalks each consisting of EG heterodimers, one central rotor including subunits D and F, and the regulatory subunits C and H. The proton translocation complex V0 consists of the proton transport subunit a, a ring of proteolipid subunits c9c'', rotary subunit d, subunits e and f, and the accessory subunits ATP6AP1/Ac45 and ATP6AP2/PRR. Interacts with AP2M1. Expressed in brain (at protein level).

The protein resides in the cytoplasmic vesicle. The protein localises to the clathrin-coated vesicle membrane. Subunit of the V1 complex of vacuolar(H+)-ATPase (V-ATPase), a multisubunit enzyme composed of a peripheral complex (V1) that hydrolyzes ATP and a membrane integral complex (V0) that translocates protons. V-ATPase is responsible for acidifying and maintaining the pH of intracellular compartments and in some cell types, is targeted to the plasma membrane, where it is responsible for acidifying the extracellular environment. Subunit H is essential for V-ATPase activity, but not for the assembly of the complex. Involved in the endocytosis mediated by clathrin-coated pits, required for the formation of endosomes. The protein is V-type proton ATPase subunit H (ATP6V1H) of Bos taurus (Bovine).